A 59-amino-acid chain; its full sequence is UPF0434 protein RHOS4_00640 (59 aa).

The protein belongs to the UPF0434 family.

This is UPF0434 protein RHOS4_00640 from Cereibacter sphaeroides (strain ATCC 17023 / DSM 158 / JCM 6121 / CCUG 31486 / LMG 2827 / NBRC 12203 / NCIMB 8253 / ATH 2.4.1.) (Rhodobacter sphaeroides).